The primary structure comprises 386 residues: Diaminopimelate decarboxylase (386 aa).

At Lys46 the chain carries N6-(pyridoxal phosphate)lysine. Pyridoxal 5'-phosphate-binding positions include Gly214 and 246 to 249; that span reads EIGR. Substrate contacts are provided by Arg249, Arg285, and Tyr289. Cys314 functions as the Proton donor in the catalytic mechanism. Residues Glu315 and Tyr343 each coordinate substrate. A pyridoxal 5'-phosphate-binding site is contributed by Tyr343.

Belongs to the Orn/Lys/Arg decarboxylase class-II family. LysA subfamily. Homodimer. Pyridoxal 5'-phosphate serves as cofactor.

It carries out the reaction meso-2,6-diaminopimelate + H(+) = L-lysine + CO2. Its pathway is amino-acid biosynthesis; L-lysine biosynthesis via DAP pathway; L-lysine from DL-2,6-diaminopimelate: step 1/1. Functionally, specifically catalyzes the decarboxylation of meso-diaminopimelate (meso-DAP) to L-lysine. This Thermotoga maritima (strain ATCC 43589 / DSM 3109 / JCM 10099 / NBRC 100826 / MSB8) protein is Diaminopimelate decarboxylase.